The primary structure comprises 383 residues: MTATLALTEDLIRRRSVTPADEGCQAILETRLKALGFDCEALVSGPDDFRVTNLWAVRRGTQGKDGKLLVFAGHTDVVPTGPLEQWHSDPFAPTHRDGKLYGRGAADMKTSIAGFVVAVEEFVKAHPAHAGSIAFLITSDEEGPAHDGTIKVVEALSARGERLDYCVIGEPTSVDTLGDMVKNGRRGSLSGKLTVKGIQCHIAYPHLGRNPIHEAAPALAELAAEVWDQGNEYFPPTSWQMSNIHGGTGATNVIPGHVTIDFNFRFSTASTPEGLKARVHAILDRHQLEYALDWTLGGEPFLTPRGELSDALSSAIEAETGVKTELSTTGGTSDGRFIAKICPQVIEFGPPNASIHKIDEHVEVRFIEPLKNVYRGVLERLVA.

Position 74 (histidine 74) interacts with Zn(2+). Aspartate 76 is a catalytic residue. Aspartate 107 serves as a coordination point for Zn(2+). The active-site Proton acceptor is the glutamate 141. Glutamate 142, glutamate 170, and histidine 356 together coordinate Zn(2+).

Belongs to the peptidase M20A family. DapE subfamily. In terms of assembly, homodimer. The cofactor is Zn(2+). Co(2+) serves as cofactor.

It carries out the reaction N-succinyl-(2S,6S)-2,6-diaminopimelate + H2O = (2S,6S)-2,6-diaminopimelate + succinate. It functions in the pathway amino-acid biosynthesis; L-lysine biosynthesis via DAP pathway; LL-2,6-diaminopimelate from (S)-tetrahydrodipicolinate (succinylase route): step 3/3. Catalyzes the hydrolysis of N-succinyl-L,L-diaminopimelic acid (SDAP), forming succinate and LL-2,6-diaminopimelate (DAP), an intermediate involved in the bacterial biosynthesis of lysine and meso-diaminopimelic acid, an essential component of bacterial cell walls. This chain is Succinyl-diaminopimelate desuccinylase, found in Cupriavidus necator (strain ATCC 17699 / DSM 428 / KCTC 22496 / NCIMB 10442 / H16 / Stanier 337) (Ralstonia eutropha).